The primary structure comprises 1350 residues: Nidogen (1350 aa).

A signal peptide spans 1 to 22 (MPTFGSKLLACLLLSSVILVSG). The 154-residue stretch at 107–260 (AFYSNVDTSF…GVWLFEVAPI (154 aa)) folds into the NIDO domain. N-linked (GlcNAc...) asparagine glycosylation occurs at N231. The EGF-like 1 domain occupies 281–321 (LALSCQAHAHQCHEKAECHDKAEGYCCVCGSGFYGNGKSCL). Intrachain disulfides connect C285–C298, C292–C307, and C309–C320. One can recognise a Nidogen G2 beta-barrel domain in the interval 325–550 (QPIRVTGTLT…GVTPESNACN (226 aa)). 2 N-linked (GlcNAc...) asparagine glycosylation sites follow: N423 and N480. The EGF-like 2 domain occupies 545 to 583 (ESNACNDGTADCVENSVCVPYEDTYRCDCYHGFAAQLDE). 5 cysteine pairs are disulfide-bonded: C549–C562, C556–C571, C595–C608, C602–C617, and C619–C630. One can recognise an EGF-like 3; calcium-binding domain in the interval 591–631 (DIDECATGSHVCDENAVCDNTEGGFNCYCTEGFEGNGYRCL). N-linked (GlcNAc...) asparagine glycosylation occurs at N633. The disordered stretch occupies residues 645-691 (VEGQAEPTSEPSPNPSPYPDQGQDQEREREDDQYPQPNPYPYPEEQI). EGF-like domains are found at residues 788 to 829 (DLIP…YNCD), 832 to 874 (SDDS…FNCQ), 912 to 953 (PAGR…TGCT), 955 to 996 (KPLS…YVCI), and 997 to 1037 (EEQN…SLCQ). Intrachain disulfides connect C792/C804, C798/C815, C817/C828, C836/C849, C843/C860, C862/C873, C916/C927, C921/C938, C940/C952, C959/C971, C965/C982, C984/C995, C1001/C1014, C1008/C1023, and C1025/C1036. A glycan (N-linked (GlcNAc...) asparagine) is linked at N801. An N-linked (GlcNAc...) asparagine glycan is attached at N1032. 4 LDL-receptor class B repeats span residues 1084 to 1126 (GRVY…DVIS), 1127 to 1170 (RRLY…DPYR), 1171 to 1216 (EKLF…LENS), and 1257 to 1282 (DQFY…QTPI).

In terms of tissue distribution, expressed in the basement membrane around the follicular epithelium of the adult ovary (at protein level).

The protein localises to the secreted. It localises to the extracellular space. The protein resides in the extracellular matrix. Its subcellular location is the basement membrane. Its function is as follows. Cell adhesion glycoprotein which is widely distributed in basement membranes. Involved in cell-extracellular matrix (ECM) interactions probably by connecting the laminin and collagen IV networks. Required for permeability and mechanical stability of basement membranes, and ECM dependent neural plasticity. Not involved in assembly of the embryonic basement membrane. The sequence is that of Nidogen from Drosophila melanogaster (Fruit fly).